A 56-amino-acid polypeptide reads, in one-letter code: U-megalopygitoxin(2)-Mo9 (56 aa).

Positions 1-25 (MKFIVLLLIVTSVLMMFAVTTEASP) are cleaved as a signal peptide. Q26 carries the post-translational modification Pyrrolidone carboxylic acid. Threonine amide is present on T55.

It belongs to the caterpillar 2 family. In terms of processing, contains 2 disulfide bonds. In terms of tissue distribution, expressed by the venom apparatus.

Its subcellular location is the secreted. Its function is as follows. Probable toxin. This is U-megalopygitoxin(2)-Mo9 from Megalopyge opercularis (Southern flannel moth).